The following is a 635-amino-acid chain: DNA-directed RNA polymerase subunit gamma (635 aa).

Zn(2+)-binding residues include cysteine 74, cysteine 76, cysteine 89, and cysteine 92. Mg(2+) is bound by residues aspartate 471, aspartate 473, and aspartate 475.

Belongs to the RNA polymerase beta' chain family. RpoC1 subfamily. In terms of assembly, in cyanobacteria the RNAP catalytic core is composed of 2 alpha, 1 beta, 1 beta', 1 gamma and 1 omega subunit. When a sigma factor is associated with the core the holoenzyme is formed, which can initiate transcription. The cofactor is Mg(2+). Zn(2+) serves as cofactor.

It catalyses the reaction RNA(n) + a ribonucleoside 5'-triphosphate = RNA(n+1) + diphosphate. DNA-dependent RNA polymerase catalyzes the transcription of DNA into RNA using the four ribonucleoside triphosphates as substrates. This chain is DNA-directed RNA polymerase subunit gamma, found in Prochlorococcus marinus (strain NATL1A).